The chain runs to 207 residues: Cytidylate kinase (207 aa).

7–15 (GVAASGKSS) contributes to the ATP binding site.

Belongs to the cytidylate kinase family. Type 1 subfamily.

It localises to the cytoplasm. It catalyses the reaction CMP + ATP = CDP + ADP. It carries out the reaction dCMP + ATP = dCDP + ADP. The protein is Cytidylate kinase of Deinococcus deserti (strain DSM 17065 / CIP 109153 / LMG 22923 / VCD115).